A 104-amino-acid chain; its full sequence is L-rhamnose mutarotase (104 aa).

A substrate-binding site is contributed by tyrosine 18. Histidine 22 functions as the Proton donor in the catalytic mechanism. Residues tyrosine 41 and 76-77 contribute to the substrate site; that span reads WW.

It belongs to the rhamnose mutarotase family. In terms of assembly, homodimer.

It localises to the cytoplasm. It catalyses the reaction alpha-L-rhamnose = beta-L-rhamnose. It functions in the pathway carbohydrate metabolism; L-rhamnose metabolism. Involved in the anomeric conversion of L-rhamnose. In Cronobacter sakazakii (strain ATCC BAA-894) (Enterobacter sakazakii), this protein is L-rhamnose mutarotase.